Here is a 52-residue protein sequence, read N- to C-terminus: Alpha-1-antiproteinase 3 (52 aa).

Residues Glu-1–His-20 form a disordered region.

The protein belongs to the serpin family. In terms of processing, N-glycosylated; contains glycans with bi- and triantennary side chains. Plasma.

The protein localises to the secreted. The chain is Alpha-1-antiproteinase 3 from Equus caballus (Horse).